Here is a 377-residue protein sequence, read N- to C-terminus: MTRNIDPIELAKALIAVPSVTPATGAVFDVLEAALTPLGFTVERFIDGIEPDGPVENLLAVRRGSGPKHFGFAGHLDVVPPGVGWTSDAFAPEIRGELLYGRGAVDMKGAIAAFVAAAAATPVDAGTISLIITGDEEGPAIFGTRALMEHMDARRVTPDMIVVGEPTSVNRLGDMVKIGRRGSVNIWIDVPGTQGHVAYPHLADNPIPKLVKILAAIDAVVLDEGSDWFQPSNIEFTDIEVGNGATNVIPASARARLSIRFNDQHRGAELVAMIERIAHEVEPAARVLGKISGEAFLTPPGELSELVAEAIHAETDICAEMSTTGGTSDARFLHALCPVVEFGLTNATMHKLDEAVAIEDLHRLTAIYRGILMRVFL.

Histidine 75 contacts Zn(2+). Aspartate 77 is a catalytic residue. Aspartate 106 is a binding site for Zn(2+). Glutamate 136 acts as the Proton acceptor in catalysis. The Zn(2+) site is built by glutamate 137, glutamate 165, and histidine 350.

It belongs to the peptidase M20A family. DapE subfamily. As to quaternary structure, homodimer. Zn(2+) is required as a cofactor. Requires Co(2+) as cofactor.

The enzyme catalyses N-succinyl-(2S,6S)-2,6-diaminopimelate + H2O = (2S,6S)-2,6-diaminopimelate + succinate. It functions in the pathway amino-acid biosynthesis; L-lysine biosynthesis via DAP pathway; LL-2,6-diaminopimelate from (S)-tetrahydrodipicolinate (succinylase route): step 3/3. In terms of biological role, catalyzes the hydrolysis of N-succinyl-L,L-diaminopimelic acid (SDAP), forming succinate and LL-2,6-diaminopimelate (DAP), an intermediate involved in the bacterial biosynthesis of lysine and meso-diaminopimelic acid, an essential component of bacterial cell walls. The chain is Succinyl-diaminopimelate desuccinylase from Sphingopyxis alaskensis (strain DSM 13593 / LMG 18877 / RB2256) (Sphingomonas alaskensis).